The sequence spans 152 residues: Endoribonuclease YbeY (152 aa).

Zn(2+)-binding residues include H117, H121, and H127.

The protein belongs to the endoribonuclease YbeY family. Zn(2+) is required as a cofactor.

It is found in the cytoplasm. Its function is as follows. Single strand-specific metallo-endoribonuclease involved in late-stage 70S ribosome quality control and in maturation of the 3' terminus of the 16S rRNA. This chain is Endoribonuclease YbeY, found in Sulfurihydrogenibium sp. (strain YO3AOP1).